A 579-amino-acid polypeptide reads, in one-letter code: Protein O-linked-mannose beta-1,4-N-acetylglucosaminyltransferase 2 (579 aa).

Residues 1–4 lie on the Cytoplasmic side of the membrane; that stretch reads MGVG. Residues 5-25 form a helical; Signal-anchor for type II membrane protein membrane-spanning segment; that stretch reads TLLNGLLVSVVAALLWKYSKL. The Lumenal segment spans residues 26-579; it reads SEHAALLEEE…PFADVLMCRT (554 aa). N-linked (GlcNAc...) asparagine glycosylation is found at Asn-98, Asn-275, and Asn-542. Residues 480–579 enclose the Fibronectin type-III domain; sequence HPGRVRDARC…PFADVLMCRT (100 aa).

This sequence belongs to the glycosyltransferase 61 family.

The protein localises to the endoplasmic reticulum membrane. The catalysed reaction is 3-O-(alpha-D-mannosyl)-L-threonyl-[protein] + UDP-N-acetyl-alpha-D-glucosamine = 3-O-(N-acetyl-beta-D-glucosaminyl-(1-&gt;4)-alpha-D-mannosyl)-L-threonyl-[protein] + UDP + H(+). It participates in protein modification; protein glycosylation. In terms of biological role, O-linked mannose beta-1,4-N-acetylglucosaminyltransferase that transfers UDP-N-acetyl-D-glucosamine to the 4-position of the mannose to generate N-acetyl-D-glucosamine-beta-1,4-O-D-mannosylprotein. Involved in the biosynthesis of the phosphorylated O-mannosyl trisaccharide (N-acetylgalactosamine-beta-3-N-acetylglucosamine-beta-4-(phosphate-6-)mannose), a carbohydrate structure present in alpha-dystroglycan (DAG1), which is required for binding laminin G-like domain-containing extracellular proteins with high affinity. The sequence is that of Protein O-linked-mannose beta-1,4-N-acetylglucosaminyltransferase 2 (pomgnt2) from Tetraodon nigroviridis (Spotted green pufferfish).